The following is a 212-amino-acid chain: Pyridoxine/pyridoxamine 5'-phosphate oxidase (212 aa).

Substrate is bound by residues 8–11 (RRNY) and Lys66. Residues 61 to 66 (RIVLLK), 76 to 77 (FT), Arg82, Lys83, and Gln105 each bind FMN. Positions 123, 127, and 131 each coordinate substrate. FMN contacts are provided by residues 140–141 (QS) and Trp184. 190–192 (RLH) provides a ligand contact to substrate. Arg194 is a binding site for FMN.

Belongs to the pyridoxamine 5'-phosphate oxidase family. Homodimer. It depends on FMN as a cofactor.

It catalyses the reaction pyridoxamine 5'-phosphate + O2 + H2O = pyridoxal 5'-phosphate + H2O2 + NH4(+). The enzyme catalyses pyridoxine 5'-phosphate + O2 = pyridoxal 5'-phosphate + H2O2. It participates in cofactor metabolism; pyridoxal 5'-phosphate salvage; pyridoxal 5'-phosphate from pyridoxamine 5'-phosphate: step 1/1. It functions in the pathway cofactor metabolism; pyridoxal 5'-phosphate salvage; pyridoxal 5'-phosphate from pyridoxine 5'-phosphate: step 1/1. Catalyzes the oxidation of either pyridoxine 5'-phosphate (PNP) or pyridoxamine 5'-phosphate (PMP) into pyridoxal 5'-phosphate (PLP). This is Pyridoxine/pyridoxamine 5'-phosphate oxidase from Cupriavidus metallidurans (strain ATCC 43123 / DSM 2839 / NBRC 102507 / CH34) (Ralstonia metallidurans).